The primary structure comprises 348 residues: D-alanine--D-alanine ligase (348 aa).

Residues 132 to 334 (KRILEVAGVP…YSDLIKELVV (203 aa)) form the ATP-grasp domain. 162–217 (LEKLTFPVFVKPANMGSSVGISKAENESELRSAIDLALKYDSRILIEQGVVAREIE) is a binding site for ATP. Mg(2+) contacts are provided by Asp-288, Glu-301, and Asn-303.

The protein belongs to the D-alanine--D-alanine ligase family. It depends on Mg(2+) as a cofactor. Mn(2+) serves as cofactor.

It is found in the cytoplasm. The catalysed reaction is 2 D-alanine + ATP = D-alanyl-D-alanine + ADP + phosphate + H(+). The protein operates within cell wall biogenesis; peptidoglycan biosynthesis. In terms of biological role, cell wall formation. The protein is D-alanine--D-alanine ligase of Streptococcus thermophilus (strain ATCC BAA-491 / LMD-9).